Reading from the N-terminus, the 276-residue chain is MSSKRNSLMLPLRIAIAGASGRMGRMLIEATLKEEGAVLASAFDRPGTTFIGRDAGELSGSATGILITDDPRAAIAAADCVIDFTRPEGTLAHLALARELGKAMVIGTTGFSTAEKEAIAAAAQAIPIVFAPNMAVGVNAVFKLLEVAARILDDGYDVEVIEAHHRFKVDAPSGTALRMGEVVACELGRDLETCAIYGREGVTGERKAETIGFSTIRGGDVVGDHTVLFAGIGERIEITHRSGSRMPYASGSLRAARFLAGRSSGLFDMQDVLGLR.

NAD(+) contacts are provided by residues G18–M23 and D44. R45 contacts NADP(+). Residues G107–T109 and A131–M134 each bind NAD(+). H164 serves as the catalytic Proton donor/acceptor. (S)-2,3,4,5-tetrahydrodipicolinate is bound at residue H165. Residue K168 is the Proton donor of the active site. Residue G174–T175 coordinates (S)-2,3,4,5-tetrahydrodipicolinate.

The protein belongs to the DapB family.

The protein resides in the cytoplasm. The catalysed reaction is (S)-2,3,4,5-tetrahydrodipicolinate + NAD(+) + H2O = (2S,4S)-4-hydroxy-2,3,4,5-tetrahydrodipicolinate + NADH + H(+). It carries out the reaction (S)-2,3,4,5-tetrahydrodipicolinate + NADP(+) + H2O = (2S,4S)-4-hydroxy-2,3,4,5-tetrahydrodipicolinate + NADPH + H(+). The protein operates within amino-acid biosynthesis; L-lysine biosynthesis via DAP pathway; (S)-tetrahydrodipicolinate from L-aspartate: step 4/4. Functionally, catalyzes the conversion of 4-hydroxy-tetrahydrodipicolinate (HTPA) to tetrahydrodipicolinate. This Aromatoleum aromaticum (strain DSM 19018 / LMG 30748 / EbN1) (Azoarcus sp. (strain EbN1)) protein is 4-hydroxy-tetrahydrodipicolinate reductase.